The chain runs to 618 residues: Glucose starvation modulator protein 1 (618 aa).

The segment at residues 20–48 (CEFCHTKHIQCDVGRPCQNCLKRNIGKFC) is a DNA-binding region (zn(2)-C6 fungal-type). A disordered region spans residues 325 to 353 (ANANTQPSHNAKLESECDSSSHSDADLEK). Residues 335–353 (AKLESECDSSSHSDADLEK) show a composition bias toward basic and acidic residues. Positions 466-538 (LLDLENMAKL…QIFNELLAFG (73 aa)) constitute a PAS domain.

Belongs to the ERT1/acuK family.

Its subcellular location is the nucleus. Transcription factor which regulates nonfermentable carbon utilization. Binds specifically to 5'-CGGN(8)CGG-3' and 5'-CGGN(9)CGG-3' sequences in the promoter region. This Saccharomyces cerevisiae (strain JAY291) (Baker's yeast) protein is Glucose starvation modulator protein 1 (GSM1).